Reading from the N-terminus, the 513-residue chain is MCLESDGVGTVSNSQGCIPGAEERGLETLPGRMNPTSLDVKAVELESSSSKPDKAYNWKRASVAAAGILSVGNVLNYLDRYTVAGVLLDIQQHFEVKDSGAGLLQTVFICSFMVAAPIFGYLGDRFNRKVILSSGIFFWSAITFSSSFIPKKYFWLLVLSRGLVGIGEASYSTIAPTIIGDLFTKNTRTLMLSVFYFAIPLGSGLGYITGSSVKQVAGDWRWALRVSPVLGVITGTLLLIFVPTAKRGHAEQLKGSSWIRDMRGLIKNRSYVFSSLATSTVSFATGALGMWIPLYLYRAQVVQKSVEPCNIPPCSTKDSLIFGAITCLTGFLGVIIGAGATKWCRRKTQRADPLVCAVGMLGSAIFICLVFVAAKSSIIAAYICIFAGETLLFSNWAITADMLMYVVIPTRRATAVALQSFTSHLLGDAGSPYLIGFISDLIQQSTTKSSLWEFLSLGYALMLCPFVVVLGGMFFLATALFFLEDREKAEKLEPCSDPFTVGNCSDSEEASIL.

11 helical membrane passes run 102–122 (GLLQTVFICSFMVAAPIFGYL), 130–150 (VILSSGIFFWSAITFSSSFIP), 163–183 (LVGIGEASYSTIAPTIIGDLF), 190–210 (LMLSVFYFAIPLGSGLGYITG), 222–242 (WALRVSPVLGVITGTLLLIFV), 276–296 (LATSTVSFATGALGMWIPLYL), 320–340 (LIFGAITCLTGFLGVIIGAGA), 354–374 (LVCAVGMLGSAIFICLVFVAA), 378–398 (IIAAYICIFAGETLLFSNWAI), 422–442 (TSHLLGDAGSPYLIGFISDLI), and 463–483 (LCPFVVVLGGMFFLATALFFL).

Belongs to the major facilitator superfamily. Spinster (TC 2.A.1.49) family.

The protein localises to the cell membrane. Its subcellular location is the endosome membrane. The enzyme catalyses sphing-4-enine 1-phosphate(in) = sphing-4-enine 1-phosphate(out). The catalysed reaction is sphinganine 1-phosphate(in) = sphinganine 1-phosphate(out). Lipid transporter that specifically mediates export of sphingosine-1-phosphate (sphing-4-enine 1-phosphate, S1P) and sphinganine-1-phosphate. In Xenopus tropicalis (Western clawed frog), this protein is Sphingosine-1-phosphate transporter SPNS2 (spns2).